The sequence spans 1372 residues: DNA-directed RNA polymerase subunit beta (1372 aa).

Belongs to the RNA polymerase beta chain family. As to quaternary structure, the RNAP catalytic core consists of 2 alpha, 1 beta, 1 beta' and 1 omega subunit. When a sigma factor is associated with the core the holoenzyme is formed, which can initiate transcription.

It carries out the reaction RNA(n) + a ribonucleoside 5'-triphosphate = RNA(n+1) + diphosphate. Functionally, DNA-dependent RNA polymerase catalyzes the transcription of DNA into RNA using the four ribonucleoside triphosphates as substrates. In Psychrobacter sp. (strain PRwf-1), this protein is DNA-directed RNA polymerase subunit beta.